Consider the following 621-residue polypeptide: F-box/LRR-repeat protein 4 (621 aa).

Arginine 28 bears the Asymmetric dimethylarginine mark. The F-box domain maps to 277-332 (NGYFDKLPYELIQLILNHLTLPDLCRLAQTCKLLNQHCCDPLQYIHLNLQPYWAKL). LRR repeat units follow at residues 376 to 397 (ELVR…EIIS), 402 to 421 (NLQD…AFSH), 427 to 448 (GLKR…SILN), 452 to 474 (DLQH…ASMI), 480 to 501 (KLRT…AELA), 504 to 524 (CPLL…STGC), 532 to 558 (LPNL…ASNC), 559 to 583 (TRLR…LLES), and 584 to 609 (CKDL…LSAS).

In terms of assembly, part of a SCF (SKP1-CUL1-F-box) protein ligase complex. Interacts with FAF2 and VCP. Interacts with PPTC7; this interaction promotes destruction of BNIP3 and NIX and mitophagy suppression.

The protein localises to the cytoplasm. The protein resides in the nucleus. It localises to the mitochondrion outer membrane. Substrate-recognition component of the mitochondria-localized SCF-FBXL4 ubiquitin E3 ligase complex that plays a role in the restriction of mitophagy by controlling the degradation of BNIP3 and NIX mitophagy receptors. Also rescues mitochondrial injury through reverting hyperactivation of DRP1-mediated mitochondrial fission. This chain is F-box/LRR-repeat protein 4 (FBXL4), found in Bos taurus (Bovine).